An 87-amino-acid polypeptide reads, in one-letter code: Small ribosomal subunit protein uS17 (87 aa).

This sequence belongs to the universal ribosomal protein uS17 family. In terms of assembly, part of the 30S ribosomal subunit.

Functionally, one of the primary rRNA binding proteins, it binds specifically to the 5'-end of 16S ribosomal RNA. The chain is Small ribosomal subunit protein uS17 from Bacillus mycoides (strain KBAB4) (Bacillus weihenstephanensis).